A 196-amino-acid polypeptide reads, in one-letter code: S-norcoclaurine synthase 2 (196 aa).

An N-terminal signal peptide occupies residues 1-19 (MRMEVVLVVFLMFIGTINC). Residue 104-106 (YRE) participates in dopamine binding. K118 acts as the Proton donor in catalysis. D137 contributes to the (4-hydroxyphenyl)acetaldehyde binding site.

This sequence belongs to the BetVI family.

The enzyme catalyses (4-hydroxyphenyl)acetaldehyde + dopamine = (S)-norcoclaurine + H2O. With respect to regulation, not inhibited by O-phenanthroline or EDTA. Involved in the biosynthesis of the common precursor of all benzylisoquinoline alkaloids such as morphine, sanguinarine, codeine or berberine. Condenses dopamine and pyruvic acid or 4-hydroxyphenylpyruvate. This is S-norcoclaurine synthase 2 (PR10A) from Coptis japonica (Japanese goldthread).